The sequence spans 961 residues: Zinc finger protein basonuclin-1 (961 aa).

The hydrophobic stretch occupies residues 210 to 219; the sequence is MTFMLPFQFF. C2H2-type zinc fingers lie at residues 325 to 348 and 353 to 382; these read VFCTACEKTFYDKGTLKIHYNAVH and HKCTIEGCNMVFSSLRSRNRHSANPNPRLH. The segment at 370–393 is disordered; it reads RNRHSANPNPRLHMPMNRNNRDKD. Positions 501–507 match the Nuclear localization signal motif; it reads PKKKSRK. Residues Ser-505 and Ser-509 each carry the phosphoserine modification. Positions 523–572 are disordered; that stretch reads EEKRHSLSSDDEVPLQVVSEDEPEDSSPRSDRVPEEQHTQLSLEEPLPQG. The segment covering 531-547 has biased composition (acidic residues); the sequence is SDDEVPLQVVSEDEPED. Positions 548-560 are enriched in basic and acidic residues; that stretch reads SSPRSDRVPEEQH. 2 C2H2-type zinc fingers span residues 687–711 and 715–743; these read FQCDICKKTFKNACSMKTHEKNTHA and HACTVEGCGAAFPSRRSRDRHSSNLSLHQ. Residues 810 to 864 are disordered; sequence ESYNSGPPSEGTILDLSTTSSMKSESSSHSSWDSDGVSEEGTALMEDSDGNCEGQ. A compositionally biased stretch (low complexity) spans 826 to 844; that stretch reads STTSSMKSESSSHSSWDSD. C2H2-type zinc fingers lie at residues 895 to 918 and 923 to 950; these read ITCHLCQKIYSNKGTFRAHYKTVH and HKCKVPGCNTMFSSVRSRNRHSQNPNLH. The segment at 937–961 is disordered; it reads VRSRNRHSQNPNLHKSLASSPSHLQ.

In terms of assembly, interacts with HSF2BP (via C-terminus). Phosphorylation on Ser-505 and Ser-509 leads to cytoplasmic localization. Epidermis and germ cells of testis and ovary.

It is found in the nucleus. Its subcellular location is the cytoplasm. It localises to the nucleoplasm. Transcriptional activator. It is likely involved in the regulation of keratinocytes terminal differentiation in squamous epithelia and hair follicles. Required for the maintenance of spermatogenesis. It is involved in the positive regulation of oocyte maturation, probably acting through the control of BMP15 levels and regulation of AKT signaling cascade. May also play a role in the early development of embryos. The polypeptide is Zinc finger protein basonuclin-1 (Bnc1) (Mus musculus (Mouse)).